The primary structure comprises 396 residues: DNA polymerase interacting tetratricopeptide repeat-containing, protein of 47 kDa (396 aa).

TPR repeat units follow at residues 91-124 (ALNY…KTDN), 129-162 (AVLY…KPDY), and 163-196 (TKAR…DVDN).

The protein belongs to the TTC4 family. Forms a complex with Hsp83 and Hsp70aa. Interacts with DNApol-alpha180; the interaction inhibits the activity of the DNA polymerase and occurs only in proliferating cells but not in quiescent cells. As to expression, more abundant in young embryos, pupae and females and a lower level expression seen in late embryos, larvae and males.

The protein resides in the nucleus. It localises to the nucleoplasm. The protein localises to the cytoplasm. In terms of biological role, may act as a co-chaperone for HSP83. This chain is DNA polymerase interacting tetratricopeptide repeat-containing, protein of 47 kDa (Dpit47), found in Drosophila melanogaster (Fruit fly).